The chain runs to 88 residues: MAHKKGASSSRNGRDSAAQRLGVKRFGGQVVKAGEILVRQRGTKFHPGVNVGRGGDDTLFAKAAGAVQFGIKRGRKTINIVEPATQDA.

The interval 1–21 is disordered; it reads MAHKKGASSSRNGRDSAAQRL.

Belongs to the bacterial ribosomal protein bL27 family.

The polypeptide is Large ribosomal subunit protein bL27 (Mycobacterium marinum (strain ATCC BAA-535 / M)).